The chain runs to 429 residues: Histidine--tRNA ligase (429 aa).

It belongs to the class-II aminoacyl-tRNA synthetase family. Homodimer.

It localises to the cytoplasm. It catalyses the reaction tRNA(His) + L-histidine + ATP = L-histidyl-tRNA(His) + AMP + diphosphate + H(+). The protein is Histidine--tRNA ligase of Oceanobacillus iheyensis (strain DSM 14371 / CIP 107618 / JCM 11309 / KCTC 3954 / HTE831).